Consider the following 211-residue polypeptide: tRNA (guanine-N(7)-)-methyltransferase (211 aa).

S-adenosyl-L-methionine contacts are provided by Glu-44, Asp-69, Asp-96, and Asp-118. Asp-118 is an active-site residue. Residue Lys-122 participates in substrate binding. An interaction with RNA region spans residues 124 to 129 (RHEKRR). Residues Asp-154 and 191-194 (TEYE) each bind substrate.

It belongs to the class I-like SAM-binding methyltransferase superfamily. TrmB family.

It catalyses the reaction guanosine(46) in tRNA + S-adenosyl-L-methionine = N(7)-methylguanosine(46) in tRNA + S-adenosyl-L-homocysteine. The protein operates within tRNA modification; N(7)-methylguanine-tRNA biosynthesis. Its function is as follows. Catalyzes the formation of N(7)-methylguanine at position 46 (m7G46) in tRNA. The protein is tRNA (guanine-N(7)-)-methyltransferase of Streptococcus equi subsp. zooepidemicus (strain MGCS10565).